The following is an 842-amino-acid chain: Translation initiation factor IF-2 (842 aa).

The segment at 121-144 (TESTSVEKSESDDVTLEEESSKKV) is disordered. The 171-residue stretch at 340 to 510 (PRAPVVTVMG…LLMAELLELK (171 aa)) folds into the tr-type G domain. The interval 349–356 (GHVDHGKT) is G1. Residue 349–356 (GHVDHGKT) coordinates GTP. The segment at 374 to 378 (GITQH) is G2. Residues 396-399 (DTPG) are G3. Residues 396–400 (DTPGH) and 450–453 (NKID) each bind GTP. The G4 stretch occupies residues 450-453 (NKID). The segment at 486–488 (SAK) is G5.

Belongs to the TRAFAC class translation factor GTPase superfamily. Classic translation factor GTPase family. IF-2 subfamily.

The protein localises to the cytoplasm. Functionally, one of the essential components for the initiation of protein synthesis. Protects formylmethionyl-tRNA from spontaneous hydrolysis and promotes its binding to the 30S ribosomal subunits. Also involved in the hydrolysis of GTP during the formation of the 70S ribosomal complex. The protein is Translation initiation factor IF-2 of Ehrlichia chaffeensis (strain ATCC CRL-10679 / Arkansas).